We begin with the raw amino-acid sequence, 229 residues long: Putative N-acetylmannosamine-6-phosphate 2-epimerase (229 aa).

This sequence belongs to the NanE family.

It catalyses the reaction an N-acyl-D-glucosamine 6-phosphate = an N-acyl-D-mannosamine 6-phosphate. It participates in amino-sugar metabolism; N-acetylneuraminate degradation; D-fructose 6-phosphate from N-acetylneuraminate: step 3/5. Converts N-acetylmannosamine-6-phosphate (ManNAc-6-P) to N-acetylglucosamine-6-phosphate (GlcNAc-6-P). This chain is Putative N-acetylmannosamine-6-phosphate 2-epimerase, found in Escherichia fergusonii (strain ATCC 35469 / DSM 13698 / CCUG 18766 / IAM 14443 / JCM 21226 / LMG 7866 / NBRC 102419 / NCTC 12128 / CDC 0568-73).